The following is a 531-amino-acid chain: RCC1 and BTB domain-containing protein 1 (531 aa).

RCC1 repeat units follow at residues 40–91, 93–145, 147–198, 199–250, 252–302, and 304–356; these read NDEV…LLTT, DGVV…ALAA, GELF…AVLD, SGEV…ALTD, GLLY…AAKT, and GGHV…FLTV. BTB domains are found at residues 370 to 437 and 470 to 499; these read ADLK…DLPP and ENAF…INHL.

In terms of tissue distribution, in the retina, mainly expressed in the inner retina with strong signals reaching up to the outer plexiform layer (at protein level).

It localises to the nucleus. May be involved in cell cycle regulation by chromatin remodeling. The polypeptide is RCC1 and BTB domain-containing protein 1 (Rcbtb1) (Mus musculus (Mouse)).